A 310-amino-acid polypeptide reads, in one-letter code: Olfactory receptor 4C16 (310 aa).

Topologically, residues 1 to 23 (MQLNNNVTEFILLGLTQDPFWKK) are extracellular. Asn6 carries an N-linked (GlcNAc...) asparagine glycan. Residues 24 to 47 (IVFVIFLRLYLGTLLGNLLIIISV) traverse the membrane as a helical segment. Residues 48-55 (KTSQALKN) lie on the Cytoplasmic side of the membrane. Residues 56–77 (PMFFFLFYLSLSDTCLSTSITP) traverse the membrane as a helical segment. Residues 78 to 98 (RMIVDALLKKTTISFSECMIQ) lie on the Extracellular side of the membrane. The cysteines at positions 95 and 187 are disulfide-linked. The helical transmembrane segment at 99 to 118 (VFSSHVFGCLEIFILILTAV) threads the bilayer. Residues 119-137 (DRYVDICKPLHYMTIISQW) lie on the Cytoplasmic side of the membrane. The helical transmembrane segment at 138-156 (VCGVLMAVAWVGSCVHSLV) threads the bilayer. Residues 157 to 193 (QIFLALSLPFCGPNVINHCFCDLQPLLKQACSETYVV) are Extracellular-facing. Residues 194–217 (NLLLVSNSGAICAVSYVMLIFSYV) form a helical membrane-spanning segment. Topologically, residues 218 to 233 (IFLHSLRNHSAEVIKK) are cytoplasmic. Residues 234 to 256 (ALSTCVSHIIVVILFFGPCIFMY) traverse the membrane as a helical segment. The Extracellular segment spans residues 257 to 267 (TCLATVFPMDK). The helical transmembrane segment at 268–287 (MIAVFYTVGTSFLNPVIYTL) threads the bilayer. Residues 288 to 310 (KNTEVKSAMRKLWSKKLITDDKR) are Cytoplasmic-facing.

Belongs to the G-protein coupled receptor 1 family.

The protein localises to the cell membrane. Functionally, odorant receptor. The sequence is that of Olfactory receptor 4C16 (OR4C16) from Homo sapiens (Human).